We begin with the raw amino-acid sequence, 110 residues long: Endoribonuclease SymE (110 aa).

One can recognise a SpoVT-AbrB domain in the interval 29-74 (SRYPDYTRIPALTMKGQWLEAAGFATGTEVDVRVMNGCIVLTAQQP).

It belongs to the SymE family.

Its subcellular location is the cytoplasm. Involved in the degradation and recycling of damaged RNA. It is itself a target for degradation by the ATP-dependent protease Lon. The chain is Endoribonuclease SymE from Salmonella typhi.